The primary structure comprises 349 residues: UDP-galactose/UDP-glucose transporter 4 (349 aa).

8 helical membrane passes run 23–43 (WQQF…NGIC), 56–76 (GWYF…MYGF), 115–135 (IMFK…IPGL), 140–160 (PVHE…FTLA), 167–187 (NFSI…AFLG), 205–225 (MLFC…ILTG), 248–268 (AMAT…FGAA), and 293–313 (LTEQ…LKMV). Residues 316–349 (PNPNPKSSGSGQTPGKLERVKFEKEDDEESRPLV) form a disordered region. Residues 340 to 349 (EDDEESRPLV) show a composition bias toward acidic residues.

Belongs to the nucleotide-sugar transporter family. UDP-galactose:UMP antiporter (TC 2.A.7.11) subfamily.

It is found in the membrane. Sugar transporter involved in the transport of nucleotide-sugars from cytoplasm into the Golgi and/or the endoplasmic reticulum. This is UDP-galactose/UDP-glucose transporter 4 from Arabidopsis thaliana (Mouse-ear cress).